We begin with the raw amino-acid sequence, 46 residues long: uncharacterized protein (46 aa).

A helical membrane pass occupies residues 20 to 42 (MAMIWVVAALVIALVVGTALNYI).

It is found in the membrane. This is an uncharacterized protein from Bacillus subtilis (strain 168).